Consider the following 123-residue polypeptide: T-complex protein 1 subunit alpha (123 aa).

Glycine 68 provides a ligand contact to ADP.

The protein belongs to the TCP-1 chaperonin family. Component of the chaperonin-containing T-complex (TRiC), a hexadecamer composed of two identical back-to-back stacked rings enclosing a protein folding chamber. Each ring is made up of eight different subunits: TCP1/CCT1, CCT2, CCT3, CCT4, CCT5, CCT6A/CCT6, CCT7, CCT8. Interacts with PACRG. Interacts with GBA1. Interacts with DLEC1.

The protein localises to the cytoplasm. Its subcellular location is the cytosol. It localises to the cytoskeleton. The protein resides in the microtubule organizing center. It is found in the centrosome. The catalysed reaction is ATP + H2O = ADP + phosphate + H(+). Functionally, component of the chaperonin-containing T-complex (TRiC), a molecular chaperone complex that assists the folding of actin, tubulin and other proteins upon ATP hydrolysis. The TRiC complex mediates the folding of WRAP53/TCAB1, thereby regulating telomere maintenance. As part of the TRiC complex may play a role in the assembly of BBSome, a complex involved in ciliogenesis regulating transports vesicles to the cilia. The sequence is that of T-complex protein 1 subunit alpha from Mesocricetus auratus (Golden hamster).